A 694-amino-acid chain; its full sequence is MDLHKQWENTETNWHKEKMELLDQFDNERKEWESQWKIMQKKIEELCREVKLWRKININESAKIIDLYHEKTIPEKVIESSPNYPDLGQSEFIRTNHKDGLRKENKREQSLVSGGNQMCKEQKATKKSKVGFLDPLATDNQKECEAWPDLRTSEEDSKSCSGALSTALEELAKVSEELCSFQEEIRKRSNHRRMKSDSFLQEMPNVTNIPHGDPMINNDQCILPISLEKEKQKNRKNLSCTNVLQSNSTKKCGIDTIDLKRNETPPVPPPRSTSRNFPSSDSEQAYERWKERLDHNSWVPHEGRSKRNYNPHFPLRQQEMSMLYPNEGKTSKDGIIFSSLVPEVKIDSKPPSNEDVGLSMWSCDIGIGAKRSPSTSWFQKTCSTPSNPKYEMVIPDHPAKSHPDLHVSNDCSSSVAESSSPLRNFSCGFERTTRNEKLAAKTDEFNRTVFRTDRNCQAIQQNHSCSKSSEDLKPCDTSSTHTGSISQSNDVSGIWKTNAHMPVPMENVPDNPTKKSTTGLVRQMQGHLSPRSYRNMLHEHDWRPSNLSGRPRSADPRSNYGVVEKLLKTYETATESALQNSKCFQDNWTKCNSDVSGGATLSQHLEMLQMEQQFQQKTAVWGGQEVKQGIDPKKITEESMSVNASHGKGFSRPARPANRRLPSRWASRSPSAPPALRRTTHNYTISLRSEALMV.

The stretch at 15 to 51 (HKEKMELLDQFDNERKEWESQWKIMQKKIEELCREVK) forms a coiled coil. Disordered regions lie at residues 259-286 (LKRN…EQAY), 461-490 (QNHS…QSND), and 643-680 (NASH…RRTT). Composition is skewed to polar residues over residues 272 to 283 (STSRNFPSSDSE) and 476 to 490 (DTSS…QSND). A compositionally biased stretch (low complexity) spans 663-677 (SRWASRSPSAPPALR).

This is an uncharacterized protein from Homo sapiens (Human).